The following is a 388-amino-acid chain: S-adenosylmethionine synthase (388 aa).

Histidine 16 contacts ATP. Aspartate 18 contributes to the Mg(2+) binding site. Glutamate 44 provides a ligand contact to K(+). Positions 57 and 100 each coordinate L-methionine. Positions 100-110 (QSADIAQGVNE) are flexible loop. Residues 167–169 (DAK), 233–234 (RF), aspartate 242, 248–249 (RK), alanine 265, and lysine 269 contribute to the ATP site. L-methionine is bound at residue aspartate 242. L-methionine is bound at residue lysine 273.

The protein belongs to the AdoMet synthase family. Homotetramer; dimer of dimers. The cofactor is Mg(2+). K(+) serves as cofactor.

Its subcellular location is the cytoplasm. The enzyme catalyses L-methionine + ATP + H2O = S-adenosyl-L-methionine + phosphate + diphosphate. The protein operates within amino-acid biosynthesis; S-adenosyl-L-methionine biosynthesis; S-adenosyl-L-methionine from L-methionine: step 1/1. In terms of biological role, catalyzes the formation of S-adenosylmethionine (AdoMet) from methionine and ATP. The overall synthetic reaction is composed of two sequential steps, AdoMet formation and the subsequent tripolyphosphate hydrolysis which occurs prior to release of AdoMet from the enzyme. The polypeptide is S-adenosylmethionine synthase (Aromatoleum aromaticum (strain DSM 19018 / LMG 30748 / EbN1) (Azoarcus sp. (strain EbN1))).